Here is a 133-residue protein sequence, read N- to C-terminus: Nickel-responsive regulator (133 aa).

His-76, His-87, His-89, and Cys-95 together coordinate Ni(2+).

This sequence belongs to the transcriptional regulatory CopG/NikR family. Homotetramer. It depends on Ni(2+) as a cofactor.

Transcriptional repressor of the nikABCDE operon. Is active in the presence of excessive concentrations of intracellular nickel. This chain is Nickel-responsive regulator, found in Enterobacter sp. (strain 638).